The primary structure comprises 530 residues: Proline--tRNA ligase, cytoplasmic (530 aa).

The protein belongs to the class-II aminoacyl-tRNA synthetase family.

It localises to the cytoplasm. The protein localises to the cytosol. It catalyses the reaction tRNA(Pro) + L-proline + ATP = L-prolyl-tRNA(Pro) + AMP + diphosphate. Catalyzes the attachment of proline to tRNA(Pro) in a two-step reaction: proline is first activated by ATP to form Pro-AMP and then transferred to the acceptor end of tRNA(Pro). The protein is Proline--tRNA ligase, cytoplasmic of Arabidopsis thaliana (Mouse-ear cress).